The chain runs to 336 residues: Probable aquaglyceroporin-2 (336 aa).

Residues 1-46 are disordered; that stretch reads MPISTINDSISESSVHKSSIPTKVEMSQNEKYSEAPSEAPTIPPPP. Residues 1–64 lie on the Cytoplasmic side of the membrane; sequence MPISTINDSI…RENCQDAFSE (64 aa). Low complexity predominate over residues 9–19; sequence SISESSVHKSS. The chain crosses the membrane as a helical span at residues 65 to 85; the sequence is FFGTFVLLLFGDGVVAQVVLS. Over 86 to 94 the chain is Extracellular; it reads RGTKGDYQS. Residues 95-115 traverse the membrane as a helical segment; the sequence is ISWGWGLGVMLGVYVGGKSGG. Residues 116–135 are Cytoplasmic-facing; the sequence is HLNPAVTLANCLFRGHPWRK. Positions 118-120 match the NPA 1 motif; that stretch reads NPA. The helical transmembrane segment at 136 to 156 threads the bilayer; it reads FPIYAVAQVLGAMAAAAVVYG. Over 157–195 the chain is Extracellular; it reads NYKSAIDAYEGGPGIRTVIGENATAGVFCTYPAEFMTRT. A glycan (N-linked (GlcNAc...) asparagine) is linked at Asn-178. The chain crosses the membrane as a helical span at residues 196–216; sequence GMFFSEFIASTILQFVIFAMA. Topologically, residues 217-223 are cytoplasmic; it reads DSANIGA. Residues 224 to 244 traverse the membrane as a helical segment; the sequence is GPLMPLGLFFLIFGIGACFGW. The Extracellular portion of the chain corresponds to 245 to 280; it reads ETGYAINLARDFGPRLVSYMLGYGSEVWSAGGYYFW. An NPA 2 motif is present at residues 251-253; the sequence is NLA. A helical transmembrane segment spans residues 281-301; the sequence is IPMVAPFFGCAFGGFLYDVFI. Over 302–336 the chain is Cytoplasmic; that stretch reads YTGPSPINTPGMGFGRLVSPRRSTWSNTYNANSPV.

It belongs to the MIP/aquaporin (TC 1.A.8) family.

Its subcellular location is the membrane. It catalyses the reaction H2O(in) = H2O(out). The enzyme catalyses glycerol(in) = glycerol(out). Functionally, probable water/glycerol channel that may have redundant functions with FgAQP4. The chain is Probable aquaglyceroporin-2 from Gibberella zeae (strain ATCC MYA-4620 / CBS 123657 / FGSC 9075 / NRRL 31084 / PH-1) (Wheat head blight fungus).